Reading from the N-terminus, the 293-residue chain is Formamidopyrimidine-DNA glycosylase (293 aa).

Pro2 (schiff-base intermediate with DNA) is an active-site residue. Glu3 (proton donor) is an active-site residue. Catalysis depends on Lys58, which acts as the Proton donor; for beta-elimination activity. Residues His104, Arg123, and Arg166 each contribute to the DNA site. Residues 257 to 293 form an FPG-type zinc finger; sequence KVYDREGEPCPTLRCKGHVQRIVQAGRSTFFCATCQR. Catalysis depends on Arg283, which acts as the Proton donor; for delta-elimination activity.

It belongs to the FPG family. Monomer. It depends on Zn(2+) as a cofactor.

It catalyses the reaction Hydrolysis of DNA containing ring-opened 7-methylguanine residues, releasing 2,6-diamino-4-hydroxy-5-(N-methyl)formamidopyrimidine.. The enzyme catalyses 2'-deoxyribonucleotide-(2'-deoxyribose 5'-phosphate)-2'-deoxyribonucleotide-DNA = a 3'-end 2'-deoxyribonucleotide-(2,3-dehydro-2,3-deoxyribose 5'-phosphate)-DNA + a 5'-end 5'-phospho-2'-deoxyribonucleoside-DNA + H(+). In terms of biological role, involved in base excision repair of DNA damaged by oxidation or by mutagenic agents. Acts as a DNA glycosylase that recognizes and removes damaged bases. Has a preference for oxidized purines, such as 7,8-dihydro-8-oxoguanine (8-oxoG). Has AP (apurinic/apyrimidinic) lyase activity and introduces nicks in the DNA strand. Cleaves the DNA backbone by beta-delta elimination to generate a single-strand break at the site of the removed base with both 3'- and 5'-phosphates. In Azorhizobium caulinodans (strain ATCC 43989 / DSM 5975 / JCM 20966 / LMG 6465 / NBRC 14845 / NCIMB 13405 / ORS 571), this protein is Formamidopyrimidine-DNA glycosylase.